A 380-amino-acid polypeptide reads, in one-letter code: Cytochrome b (380 aa).

The next 4 membrane-spanning stretches (helical) occupy residues 34 to 54 (FGSL…LLAA), 78 to 99 (WLIR…YLHI), 114 to 134 (WNTG…GYVL), and 179 to 199 (FFTL…IHLT). Residues H84 and H98 each contribute to the heme b site. Heme b is bound by residues H183 and H197. H202 lines the a ubiquinone pocket. 4 helical membrane passes run 227–247 (TKDI…ALFS), 289–309 (LGGV…PLLH), 321–341 (LSQL…WIGS), and 348–368 (FIII…ILFP).

Belongs to the cytochrome b family. As to quaternary structure, the cytochrome bc1 complex contains 11 subunits: 3 respiratory subunits (MT-CYB, CYC1 and UQCRFS1), 2 core proteins (UQCRC1 and UQCRC2) and 6 low-molecular weight proteins (UQCRH/QCR6, UQCRB/QCR7, UQCRQ/QCR8, UQCR10/QCR9, UQCR11/QCR10 and a cleavage product of UQCRFS1). This cytochrome bc1 complex then forms a dimer. The cofactor is heme b.

The protein resides in the mitochondrion inner membrane. Functionally, component of the ubiquinol-cytochrome c reductase complex (complex III or cytochrome b-c1 complex) that is part of the mitochondrial respiratory chain. The b-c1 complex mediates electron transfer from ubiquinol to cytochrome c. Contributes to the generation of a proton gradient across the mitochondrial membrane that is then used for ATP synthesis. In Eudyptes chrysocome (Western rockhopper penguin), this protein is Cytochrome b (MT-CYB).